Here is a 386-residue protein sequence, read N- to C-terminus: Phosphoglycerate kinase (386 aa).

Substrate-binding positions include Asp-21–Asn-23, Arg-36, His-59–Arg-62, Arg-112, and Arg-145. ATP contacts are provided by residues Lys-196, Glu-313, and Gly-339–Thr-342.

Belongs to the phosphoglycerate kinase family. As to quaternary structure, monomer.

It is found in the cytoplasm. The catalysed reaction is (2R)-3-phosphoglycerate + ATP = (2R)-3-phospho-glyceroyl phosphate + ADP. It functions in the pathway carbohydrate degradation; glycolysis; pyruvate from D-glyceraldehyde 3-phosphate: step 2/5. The chain is Phosphoglycerate kinase from Haemophilus influenzae (strain 86-028NP).